We begin with the raw amino-acid sequence, 90 residues long: Delta-aiptatoxin-Adi1a (90 aa).

The N-terminal stretch at 1–21 is a signal peptide; the sequence is MKTAMLIAVLGFCAALCFVES. Residues 22–44 constitute a propeptide that is removed on maturation; sequence SHEEEREAAVYLTDLVSKAESAI. 3 cysteine pairs are disulfide-bonded: cysteine 50–cysteine 86, cysteine 52–cysteine 77, and cysteine 70–cysteine 87.

The protein belongs to the sea anemone sodium channel inhibitory toxin family.

The protein localises to the secreted. Its subcellular location is the nematocyst. Functionally, cardioactive peptide that acts on voltage-gated sodium channels (hNav1.5/SCN5A) and voltage-gated potassium channels (Kv). The activity on sodium channels consists of inhibition on sodium current inactivation with no significant effect on current activation. This effect may be caused by direct interaction of the toxin with sodium channel site-3. The activity on potassium channels consists of a significant increase of the amplitude of the transient component of the potassium current, shifting the current threshold to more negative membrane potentials. These effects are concentration-dependent and reversible and may be due to a direct interaction between the toxin and the voltage-sensing domain of the channel. Physiologically, this toxin increases the amplitude of cardiomyocyte contraction and slows the late phase of the twitch relaxation velocity with no induction of spontaneous twitching. It increases action potential duration of cardiomyocytes with no effect on its threshold and on the cell resting potential. On insects, it shows neurotoxic activity to the blowfly larvae S.falculaty, causing an immediate spasm that progressed to body contraction and paralysis. The protein is Delta-aiptatoxin-Adi1a of Exaiptasia diaphana (Tropical sea anemone).